Consider the following 353-residue polypeptide: Carbamoyl phosphate synthase arginine-specific small chain (353 aa).

The segment at 1–162 is CPSase; that stretch reads MEGYLVLEDG…EISTFGDGNK (162 aa). L-glutamine is bound by residues Ser-44, Gly-210, and Gly-212. The Glutamine amidotransferase type-1 domain occupies 163-349; that stretch reads HIALIDFGYK…LKNVIPARRE (187 aa). Cys-237 functions as the Nucleophile in the catalytic mechanism. Leu-238, Gln-241, Asn-279, and Tyr-282 together coordinate L-glutamine. Catalysis depends on residues His-322 and Glu-324.

It belongs to the CarA family. In terms of assembly, composed of two chains; the small (or glutamine) chain promotes the hydrolysis of glutamine to ammonia, which is used by the large (or ammonia) chain to synthesize carbamoyl phosphate. Tetramer of heterodimers (alpha,beta)4.

It carries out the reaction hydrogencarbonate + L-glutamine + 2 ATP + H2O = carbamoyl phosphate + L-glutamate + 2 ADP + phosphate + 2 H(+). It catalyses the reaction L-glutamine + H2O = L-glutamate + NH4(+). Its pathway is amino-acid biosynthesis; L-arginine biosynthesis; carbamoyl phosphate from bicarbonate: step 1/1. Its function is as follows. Small subunit of the glutamine-dependent carbamoyl phosphate synthetase (CPSase). CPSase catalyzes the formation of carbamoyl phosphate from the ammonia moiety of glutamine, carbonate, and phosphate donated by ATP, constituting the first step of the biosynthetic pathway leading to arginine and/or urea. The small subunit (glutamine amidotransferase) binds and cleaves glutamine to supply the large subunit with the substrate ammonia. The sequence is that of Carbamoyl phosphate synthase arginine-specific small chain from Bacillus subtilis (strain 168).